The sequence spans 301 residues: Ribonuclease H2 subunit A (301 aa).

M1 carries the post-translational modification N-acetylmethionine. The region spanning 28-251 is the RNase H type-2 domain; that stretch reads PCVLGVDEAG…AQAILEKEAE (224 aa). A divalent metal cation is bound by residues D34, E35, and D142. T217 bears the Phosphothreonine mark. At S258 the chain carries Phosphoserine.

Belongs to the RNase HII family. Eukaryotic subfamily. The RNase H2 complex is a heterotrimer composed of the catalytic subunit RNASEH2A and the non-catalytic subunits RNASEH2B and RNASEH2C. Mn(2+) is required as a cofactor. Mg(2+) serves as cofactor.

The protein resides in the nucleus. It catalyses the reaction Endonucleolytic cleavage to 5'-phosphomonoester.. Its function is as follows. Catalytic subunit of RNase HII, an endonuclease that specifically degrades the RNA of RNA:DNA hybrids. Participates in DNA replication, possibly by mediating the removal of lagging-strand Okazaki fragment RNA primers during DNA replication. Mediates the excision of single ribonucleotides from DNA:RNA duplexes. The sequence is that of Ribonuclease H2 subunit A (Rnaseh2a) from Rattus norvegicus (Rat).